The sequence spans 487 residues: Serine/threonine-protein kinase 4 (487 aa).

At Met1 the chain carries N-acetylmethionine. The residue at position 3 (Thr3) is a Phosphothreonine. In terms of domain architecture, Protein kinase spans 30–281; sequence FDVLEKLGEG…ATQLLQHPFV (252 aa). ATP contacts are provided by residues 36 to 44 and Lys59; that span reads LGEGSYGSV. The Proton acceptor role is filled by Asp149. The residue at position 183 (Thr183) is a Phosphothreonine; by autocatalysis. Ser265 bears the Phosphoserine mark. Residues 290 to 310 adopt a coiled-coil conformation; the sequence is LRDLINEAMDVKLKRQESQQR. The span at 303–312 shows a compositional bias: basic and acidic residues; sequence KRQESQQREV. Positions 303–332 are disordered; sequence KRQESQQREVDQDDEENSEEDEMDSGTMVR. Residues 313-326 are compositionally biased toward acidic residues; the sequence is DQDDEENSEEDEMD. Ser320 is modified (phosphoserine). Thr340 and Thr367 each carry phosphothreonine. Residue Thr387 is modified to Phosphothreonine; by PKB/AKT1. Ser410 and Ser414 each carry phosphoserine. Tyr433 is subject to Phosphotyrosine. An SARAH domain is found at 433 to 480; that stretch reads YEFLKSWTVEDLQKRLLALDPMMEQEIEEIRQKYQSKRQPILDAIEAK.

It belongs to the protein kinase superfamily. STE Ser/Thr protein kinase family. STE20 subfamily. As to quaternary structure, homodimer; mediated via the coiled-coil region. Interacts with NORE1, which inhibits autoactivation. Interacts with and stabilizes SAV1. Interacts with RASSF1. Interacts with FOXO3. Interacts with RASSF2 (via SARAH domain). Interacts with AR, PKB/AKT1, TNNI3 and SIRT1. Interacts with DLG5 (via PDZ domain 3). Interacts with MARK3 and SCRIB in the presence of DLG5. Mg(2+) serves as cofactor. Post-translationally, autophosphorylated on serine and threonine residues. Phosphorylation at Thr-387 by PKB/AKT1, leads to inhibition of its: kinase activity, nuclear translocation and autophosphorylation at Thr-183. It also diminishes its cleavage by caspases and its ability to phosphorylate FOXO3. In terms of processing, proteolytically cleaved by caspase-3 during apoptosis at Asp-326 and Asp-349 resulting in a 37 kDa or a 39 kDa subunit respectively. The 39 kDa subunit is further cleaved into the 37 kDa form. Proteolytic cleavage results in kinase activation and nuclear translocation of the truncated form (MST1/N). It is less likely that cleavage at Asp-349 is a prerequisite for activation as this site is not conserved in the murine ortholog.

It is found in the cytoplasm. The protein localises to the nucleus. The enzyme catalyses L-seryl-[protein] + ATP = O-phospho-L-seryl-[protein] + ADP + H(+). It carries out the reaction L-threonyl-[protein] + ATP = O-phospho-L-threonyl-[protein] + ADP + H(+). Its activity is regulated as follows. Inhibited by the C-terminal non-catalytic region. Activated by caspase-cleavage. Full activation also requires homodimerization and autophosphorylation of Thr-183. Activated by RASSF1 which acts by preventing its dephosphorylation. In terms of biological role, stress-activated, pro-apoptotic kinase which, following caspase-cleavage, enters the nucleus and induces chromatin condensation followed by internucleosomal DNA fragmentation. Key component of the Hippo signaling pathway which plays a pivotal role in organ size control and tumor suppression by restricting proliferation and promoting apoptosis. The core of this pathway is composed of a kinase cascade wherein STK3/MST2 and STK4/MST1, in complex with its regulatory protein SAV1, phosphorylates and activates LATS1/2 in complex with its regulatory protein MOB1, which in turn phosphorylates and inactivates YAP1 oncoprotein and WWTR1/TAZ. Phosphorylation of YAP1 by LATS2 inhibits its translocation into the nucleus to regulate cellular genes important for cell proliferation, cell death, and cell migration. STK3/MST2 and STK4/MST1 are required to repress proliferation of mature hepatocytes, to prevent activation of facultative adult liver stem cells (oval cells), and to inhibit tumor formation. Phosphorylates 'Ser-14' of histone H2B (H2BS14ph) during apoptosis. Phosphorylates FOXO3 upon oxidative stress, which results in its nuclear translocation and cell death initiation. Phosphorylates MOBKL1A, MOBKL1B and RASSF2. Phosphorylates TNNI3 (cardiac Tn-I) and alters its binding affinity to TNNC1 (cardiac Tn-C) and TNNT2 (cardiac Tn-T). Phosphorylates FOXO1 on 'Ser-212' and regulates its activation and stimulates transcription of PMAIP1 in a FOXO1-dependent manner. Phosphorylates SIRT1 and inhibits SIRT1-mediated p53/TP53 deacetylation, thereby promoting p53/TP53 dependent transcription and apoptosis upon DNA damage. Acts as an inhibitor of PKB/AKT1. Phosphorylates AR on 'Ser-650' and suppresses its activity by intersecting with PKB/AKT1 signaling and antagonizing formation of AR-chromatin complexes. The polypeptide is Serine/threonine-protein kinase 4 (STK4) (Papio anubis (Olive baboon)).